The chain runs to 176 residues: Adenine phosphoribosyltransferase (176 aa).

It belongs to the purine/pyrimidine phosphoribosyltransferase family. Homodimer.

It localises to the cytoplasm. The enzyme catalyses AMP + diphosphate = 5-phospho-alpha-D-ribose 1-diphosphate + adenine. It participates in purine metabolism; AMP biosynthesis via salvage pathway; AMP from adenine: step 1/1. Catalyzes a salvage reaction resulting in the formation of AMP, that is energically less costly than de novo synthesis. The sequence is that of Adenine phosphoribosyltransferase from Borreliella burgdorferi (strain ATCC 35210 / DSM 4680 / CIP 102532 / B31) (Borrelia burgdorferi).